Here is a 268-residue protein sequence, read N- to C-terminus: ClpXP adapter protein SpxH (268 aa).

The protein belongs to the SpxH family. As to quaternary structure, interacts with Spx.

Its subcellular location is the cytoplasm. Functionally, adapter protein required for efficient degradation of Spx by ClpXP under non-stress conditions. Interaction with Spx stabilizes Spx and exposes the C-terminus of Spx for recognition and proteolysis by ClpXP. The polypeptide is ClpXP adapter protein SpxH (Staphylococcus aureus (strain Mu3 / ATCC 700698)).